Consider the following 173-residue polypeptide: Photosystem I assembly protein Ycf3 (173 aa).

TPR repeat units follow at residues 35 to 68, 72 to 105, and 120 to 153; these read AYVY…EENA, GETL…NPKQ, and GRTA…NPGG.

This sequence belongs to the Ycf3 family.

It is found in the cellular thylakoid membrane. In terms of biological role, essential for the assembly of the photosystem I (PSI) complex. May act as a chaperone-like factor to guide the assembly of the PSI subunits. This Synechococcus sp. (strain CC9311) protein is Photosystem I assembly protein Ycf3.